The chain runs to 77 residues: DNA-directed RNA polymerase subunit omega (77 aa).

This sequence belongs to the RNA polymerase subunit omega family. As to quaternary structure, the RNAP catalytic core consists of 2 alpha, 1 beta, 1 beta' and 1 omega subunit. When a sigma factor is associated with the core the holoenzyme is formed, which can initiate transcription.

It carries out the reaction RNA(n) + a ribonucleoside 5'-triphosphate = RNA(n+1) + diphosphate. Functionally, promotes RNA polymerase assembly. Latches the N- and C-terminal regions of the beta' subunit thereby facilitating its interaction with the beta and alpha subunits. This chain is DNA-directed RNA polymerase subunit omega, found in Dichelobacter nodosus (strain VCS1703A).